The sequence spans 373 residues: 3 beta-hydroxysteroid dehydrogenase/Delta 5--&gt;4-isomerase (373 aa).

Tyr-155 (proton acceptor) is an active-site residue. Lys-159 is an NAD(+) binding site. Residues 288–308 traverse the membrane as a helical segment; it reads ISLEYWLAFLLEIVSFLLSPI.

Belongs to the 3-beta-HSD family.

It is found in the endoplasmic reticulum membrane. It localises to the mitochondrion membrane. It carries out the reaction a 3beta-hydroxy-Delta(5)-steroid + NAD(+) = a 3-oxo-Delta(5)-steroid + NADH + H(+). It catalyses the reaction a 3-oxo-Delta(5)-steroid = a 3-oxo-Delta(4)-steroid. It participates in lipid metabolism; steroid biosynthesis. In terms of biological role, 3-beta-HSD is a bifunctional enzyme, that catalyzes the oxidative conversion of Delta(5)-ene-3-beta-hydroxy steroid, and the oxidative conversion of ketosteroids. The 3-beta-HSD enzymatic system plays a crucial role in the biosynthesis of all classes of hormonal steroids. This chain is 3 beta-hydroxysteroid dehydrogenase/Delta 5--&gt;4-isomerase (HSD3B), found in Canis lupus familiaris (Dog).